The primary structure comprises 249 residues: ATP synthase subunit a, chloroplastic (249 aa).

Helical transmembrane passes span 40-60 (QVLI…VLAI), 97-117 (VPFI…GALL), 136-156 (INTT…AGLS), 201-221 (LVVV…VMFL), and 222-242 (GLFT…AYIG).

This sequence belongs to the ATPase A chain family. In terms of assembly, F-type ATPases have 2 components, CF(1) - the catalytic core - and CF(0) - the membrane proton channel. CF(1) has five subunits: alpha(3), beta(3), gamma(1), delta(1), epsilon(1). CF(0) has four main subunits: a, b, b' and c.

The protein localises to the plastid. Its subcellular location is the chloroplast thylakoid membrane. Key component of the proton channel; it plays a direct role in the translocation of protons across the membrane. The protein is ATP synthase subunit a, chloroplastic of Nasturtium officinale (Watercress).